Here is a 76-residue protein sequence, read N- to C-terminus: U10-ctenitoxin-Pn1a (76 aa).

The first 15 residues, serine 1–alanine 15, serve as a signal peptide directing secretion. Residues glutamate 16–glycine 36 constitute a propeptide that is removed on maturation. Cystine bridges form between cysteine 39–cysteine 54, cysteine 46–cysteine 59, cysteine 53–cysteine 73, and cysteine 61–cysteine 71.

This sequence belongs to the neurotoxin 02 (plectoxin) family. 09 subfamily. As to expression, expressed by the venom gland.

Its subcellular location is the secreted. The polypeptide is U10-ctenitoxin-Pn1a (Phoneutria nigriventer (Brazilian armed spider)).